Consider the following 208-residue polypeptide: Small ribosomal subunit protein uS4 (208 aa).

The S4 RNA-binding domain maps to 98 to 158 (RRLDNVVYRL…EKNRKISVVA (61 aa)).

Belongs to the universal ribosomal protein uS4 family. As to quaternary structure, part of the 30S ribosomal subunit. Contacts protein S5. The interaction surface between S4 and S5 is involved in control of translational fidelity.

One of the primary rRNA binding proteins, it binds directly to 16S rRNA where it nucleates assembly of the body of the 30S subunit. Its function is as follows. With S5 and S12 plays an important role in translational accuracy. This Lawsonia intracellularis (strain PHE/MN1-00) protein is Small ribosomal subunit protein uS4.